A 419-amino-acid chain; its full sequence is Gamma-glutamyl phosphate reductase (419 aa).

Belongs to the gamma-glutamyl phosphate reductase family.

It is found in the cytoplasm. It carries out the reaction L-glutamate 5-semialdehyde + phosphate + NADP(+) = L-glutamyl 5-phosphate + NADPH + H(+). Its pathway is amino-acid biosynthesis; L-proline biosynthesis; L-glutamate 5-semialdehyde from L-glutamate: step 2/2. In terms of biological role, catalyzes the NADPH-dependent reduction of L-glutamate 5-phosphate into L-glutamate 5-semialdehyde and phosphate. The product spontaneously undergoes cyclization to form 1-pyrroline-5-carboxylate. This chain is Gamma-glutamyl phosphate reductase, found in Oleidesulfovibrio alaskensis (strain ATCC BAA-1058 / DSM 17464 / G20) (Desulfovibrio alaskensis).